The following is a 233-amino-acid chain: Small ribosomal subunit protein uS3 (233 aa).

Positions 39-107 (VRQFLMKTLE…PVQINISEVR (69 aa)) constitute a KH type-2 domain.

Belongs to the universal ribosomal protein uS3 family. In terms of assembly, part of the 30S ribosomal subunit. Forms a tight complex with proteins S10 and S14.

Functionally, binds the lower part of the 30S subunit head. Binds mRNA in the 70S ribosome, positioning it for translation. The sequence is that of Small ribosomal subunit protein uS3 from Buchnera aphidicola subsp. Acyrthosiphon pisum (strain APS) (Acyrthosiphon pisum symbiotic bacterium).